A 310-amino-acid polypeptide reads, in one-letter code: tRNA uridine(34) hydroxylase (310 aa).

Residues 124-218 (SDPEVLLIDT…YFEEVPQEES (95 aa)) enclose the Rhodanese domain. Residue cysteine 178 is the Cysteine persulfide intermediate of the active site.

It belongs to the TrhO family.

The enzyme catalyses uridine(34) in tRNA + AH2 + O2 = 5-hydroxyuridine(34) in tRNA + A + H2O. Catalyzes oxygen-dependent 5-hydroxyuridine (ho5U) modification at position 34 in tRNAs. This Pseudomonas putida (strain W619) protein is tRNA uridine(34) hydroxylase.